We begin with the raw amino-acid sequence, 1261 residues long: AT-rich interactive domain-containing protein 4A (1261 aa).

The DNA-binding stretch occupies residues 4–121; sequence ADEPAYLTVG…RHFAESETLD (118 aa). Disordered regions lie at residues 142-169, 273-310, and 435-470; these read RGRRSSLPITEDEKEEESSEEEDEDKRR, ESSSSDDEECPAEEHEEEKEKEAKKEEEELPEEELDPE, and APEMPLLDVKSEPEENTDSNSESDREDTELKSPRGR. Acidic residues-rich tracts occupy residues 151–165 and 276–289; these read TEDEKEEESSEEEDE and SSDDEECPAEEHEE. The span at 290-299 shows a compositional bias: basic and acidic residues; the sequence is EKEKEAKKEE. A compositionally biased stretch (acidic residues) spans 300–310; sequence EELPEEELDPE. The ARID domain maps to 309–401; the sequence is PEERDNFLQQ…YLYGFEEYCR (93 aa). Lys481 is covalently cross-linked (Glycyl lysine isopeptide (Lys-Gly) (interchain with G-Cter in SUMO2)). Disordered regions lie at residues 498–582, 633–768, and 842–953; these read LENK…GTKV, WPLD…EAGD, and FSST…EDAM. The segment covering 512–522 has biased composition (basic and acidic residues); sequence PAAKREHELLF. A compositionally biased stretch (basic residues) spans 526 to 536; the sequence is STPKNKEKKIK. The span at 541–551 shows a compositional bias: acidic residues; sequence SERDSDEEEEK. Residues 552 to 564 show a composition bias toward basic and acidic residues; the sequence is SQEREETESRCDS. Positions 565-574 are enriched in acidic residues; that stretch reads EGEDEEDDTE. Residues 579 to 631 form the Tudor-knot domain; it reads GTKVKVKYGRGKTQKIYEASIKSTEMDDGEILYLVHYYGWNVRYDEWVKADRI. The segment covering 640–649 has biased composition (basic residues); it reads PKKKQKKKVK. Basic and acidic residues predominate over residues 650–665; the sequence is NKEDSEKDEKRDEERQ. Residues 676–689 show a composition bias toward polar residues; it reads STFSPNMPYSLSKT. Ser679 carries the post-translational modification Phosphoserine. Residues 690 to 702 show a composition bias toward low complexity; it reads SNSEGKSDSCSSD. A compositionally biased stretch (basic and acidic residues) spans 708–753; sequence QLEKSSGGEDLSPDVKEELEKNENAHDDKLDEENPKIVHISKENDR. A Phosphoserine modification is found at Ser719. Residues Lys723 and Lys743 each participate in a glycyl lysine isopeptide (Lys-Gly) (interchain with G-Cter in SUMO2) cross-link. Ser867 is modified (phosphoserine). Composition is skewed to basic and acidic residues over residues 899–909 and 929–947; these read KGAHVEQHFET and TSEKSDSPAEEEPVHTPLK. A retinoblastoma protein binding region spans residues 955–968; it reads LIGPETLVCHEVDL. The segment covering 1067–1080 has biased composition (basic and acidic residues); sequence HERESREKGQKRPS. 2 disordered regions span residues 1067–1173 and 1216–1261; these read HERE…RTYK and RRRK…VECR. A phosphoserine mark is found at Ser1113 and Ser1149. The span at 1230–1252 shows a compositional bias: low complexity; that stretch reads HAGASMSSASSDTGMSPSSSSPP.

In terms of assembly, identified in mSin3A corepressor complexes together with SIN3A, SIN3B, RBBP4, RBBP7, SAP30, BRMS1, HDAC1 and HDAC2. Interacts with BRMS1. Interacts with RB1. Interacts with ARID4B. Interacts with AR. In terms of tissue distribution, expressed in Sertoli cells of the testis.

The protein localises to the nucleus. Its function is as follows. DNA-binding protein which modulates activity of several transcription factors including RB1 (retinoblastoma-associated protein) and AR (androgen receptor). May function as part of an mSin3A repressor complex. Has no intrinsic transcriptional activity. Plays a role in the regulation of epigenetic modifications at the PWS/AS imprinting center near the SNRPN promoter, where it might function as part of a complex with RB1 and ARID4B. Involved in spermatogenesis, together with ARID4B, where it acts as a transcriptional coactivator for AR and enhances expression of genes required for sperm maturation. Regulates expression of the tight junction protein CLDN3 in the testis, which is important for integrity of the blood-testis barrier. Plays a role in myeloid homeostasis where it regulates the histone methylation state of bone marrow cells and expression of various genes involved in hematopoiesis. May function as a leukemia suppressor. The protein is AT-rich interactive domain-containing protein 4A of Mus musculus (Mouse).